Consider the following 59-residue polypeptide: U-scoloptoxin(23)-Er2a (59 aa).

Belongs to the scoloptoxin-23 family. Contains 1 disulfide bond. As to expression, expressed by the venom gland.

The protein resides in the secreted. This Ethmostigmus rubripes (Giant centipede) protein is U-scoloptoxin(23)-Er2a.